Here is a 177-residue protein sequence, read N- to C-terminus: MEIRRRSVRHLISLLLFLFYSETACHPLGKRPCKMQAFRIWDVNQKTFYMRNNQLVAGYLQESNTKLQEKIDVVPIEPDALFLGLHGRKLCLACVKSGDEIRFQLEAVNITDLSKNKEENKRFTFIRSNSGPTTSFESAACPGWFLCTAQEADRPVSLTNKPKESFMVTKFYLQEDQ.

The N-terminal stretch at 1–25 (MEIRRRSVRHLISLLLFLFYSETAC) is a signal peptide. An intrachain disulfide couples Cys-91 to Cys-141. An N-linked (GlcNAc...) asparagine glycan is attached at Asn-109.

The protein belongs to the IL-1 family.

The protein localises to the secreted. Functionally, anti-inflammatory antagonist of interleukin-1 family of proinflammatory cytokines such as interleukin-1beta/IL1B and interleukin-1alpha/IL1A. Protects from immune dysregulation and uncontrolled systemic inflammation triggered by IL1 for a range of innate stimulatory agents such as pathogens. The protein is Interleukin-1 receptor antagonist protein (IL1RN) of Equus caballus (Horse).